Consider the following 471-residue polypeptide: MSDAPDPSSAANTMWGGRFAAGPDAIMQAINASIGFDKRLYAQDIRGSRAHAAMLAAQGILTSRDAEAIGEGLLTVLSEIEAGGFPFRVELEDIHMNVEARLKELIGEPAGRLHTARSRNDQVAVDFRLWVRDQCDAAISGIEALMRAFLAQAEAGADWVMPGFTHLQTAQPVTWGHHMLAYVEMLARDRSRFVDARARMNECPLGAAALAGTGFPIDRHMTAAALGFDRPTANSLDSVSDRDFALEFLSASAICALHLSRFAEELVIWSSAQFRFVRLSDRWTTGSSIMPQKKNPDAAELLRAKMGRVLGAAVALFTVMKGLPLTYSKDMQEDKEQVFDAADTLMLGLAAMTGMVGDMQANRESLAAAAASGFSTATDLADWLVRELNLPFRDAHHVTGTLVARAEARGCDLPDLSLAEMQEVHPGIREDVFAVLGVENSVRSRTSYGGTAPDNVRAQAARWKELLGDAA.

Belongs to the lyase 1 family. Argininosuccinate lyase subfamily.

It is found in the cytoplasm. It catalyses the reaction 2-(N(omega)-L-arginino)succinate = fumarate + L-arginine. It participates in amino-acid biosynthesis; L-arginine biosynthesis; L-arginine from L-ornithine and carbamoyl phosphate: step 3/3. The sequence is that of Argininosuccinate lyase from Cereibacter sphaeroides (strain ATCC 17023 / DSM 158 / JCM 6121 / CCUG 31486 / LMG 2827 / NBRC 12203 / NCIMB 8253 / ATH 2.4.1.) (Rhodobacter sphaeroides).